The primary structure comprises 89 residues: Large ribosomal subunit protein bL27 (89 aa).

Belongs to the bacterial ribosomal protein bL27 family.

The chain is Large ribosomal subunit protein bL27 from Bacteroides thetaiotaomicron (strain ATCC 29148 / DSM 2079 / JCM 5827 / CCUG 10774 / NCTC 10582 / VPI-5482 / E50).